Reading from the N-terminus, the 298-residue chain is Probable alpha-L-glutamate ligase 2 (298 aa).

Positions 104-287 (MQLLSRQGIG…VADAIICFME (184 aa)) constitute an ATP-grasp domain. Residues lysine 141, 178-179 (EY), aspartate 187, and 211-213 (RSN) each bind ATP. 3 residues coordinate Mg(2+): aspartate 248, glutamate 260, and asparagine 262. Aspartate 248, glutamate 260, and asparagine 262 together coordinate Mn(2+).

It belongs to the RimK family. Requires Mg(2+) as cofactor. Mn(2+) is required as a cofactor.

This is Probable alpha-L-glutamate ligase 2 from Shewanella frigidimarina (strain NCIMB 400).